A 416-amino-acid chain; its full sequence is FBD-associated F-box protein At3g52670 (416 aa).

An F-box domain is found at 9–62 (EDRMNQLPEDLILRILSFLPTELVIATSVLSKQWRSLWKLVPNLEFDSDDYESE). Residues 327–378 (KWNEPKYVPECLLSHLETFVWIRYDWEREEEKEVATYILRNARWLKKGTIST) enclose the FBD domain.

The sequence is that of FBD-associated F-box protein At3g52670 from Arabidopsis thaliana (Mouse-ear cress).